The chain runs to 351 residues: tRNA (guanine(26)-N(2))-dimethyltransferase (351 aa).

A Trm1 methyltransferase domain is found at 4-350 (VLRREGAVQF…AGYGEVKRAL (347 aa)). S-adenosyl-L-methionine contacts are provided by Arg39, Arg65, Asp83, Asp109, and Ala110.

The protein belongs to the class I-like SAM-binding methyltransferase superfamily. Trm1 family.

It catalyses the reaction guanosine(26) in tRNA + 2 S-adenosyl-L-methionine = N(2)-dimethylguanosine(26) in tRNA + 2 S-adenosyl-L-homocysteine + 2 H(+). In terms of biological role, dimethylates a single guanine residue at position 26 of a number of tRNAs using S-adenosyl-L-methionine as donor of the methyl groups. The polypeptide is tRNA (guanine(26)-N(2))-dimethyltransferase (Pyrobaculum neutrophilum (strain DSM 2338 / JCM 9278 / NBRC 100436 / V24Sta) (Thermoproteus neutrophilus)).